The following is a 282-amino-acid chain: Phospholipid phosphatase 1 (282 aa).

At 1–6 (MFDKPR) the chain is on the cytoplasmic side. The short motif at 5-7 (PRL) is the PDZ-binding; involved in localization to the apical cell membrane element. Residues 7–27 (LPYVVLDVICVLLAGLPFIIL) form a helical membrane-spanning segment. The Extracellular segment spans residues 28–53 (TSRHTPFQRGVFCTDESIKYPYREDT). A helical membrane pass occupies residues 54–74 (IPYALLGGIVIPFCIIVMITG). Over 75 to 88 (ETLSVYFNVLHSNS) the chain is Cytoplasmic. A helical membrane pass occupies residues 89 to 109 (FVSNHYIATIYKAVGAFLFGA). Residues 110–164 (SASQSLTDIAKYSIGRLRPHFLAVCNPDWSKINCSDGYIENFVCQGNEQKVREGR) lie on the Extracellular side of the membrane. The tract at residues 120 to 128 (KYSIGRLRP) is phosphatase sequence motif I. N-linked (GlcNAc...) asparagine glycosylation occurs at N142. The chain crosses the membrane as a helical span at residues 165–185 (LSFYSGHSSFSMYCMLFVALY). The segment at 168-171 (YSGH) is phosphatase sequence motif II. H171 acts as the Proton donors in catalysis. Residues 186–194 (LQARMKGDW) are Cytoplasmic-facing. A helical membrane pass occupies residues 195–215 (ARLLRPMLQFGLVALSIYVGL). The segment at 216 to 227 (SRVSDYKHHWSD) is phosphatase sequence motif III. Over 216 to 229 (SRVSDYKHHWSDVL) the chain is Extracellular. The Nucleophile role is filled by H223. A helical transmembrane segment spans residues 230–250 (IGLIQGAVVAILVVLYVTDFF). The Cytoplasmic portion of the chain corresponds to 251–282 (KTTESNKERKEDSHTTLHETTNRQSYARNHEP). Basic and acidic residues predominate over residues 257-271 (KERKEDSHTTLHETT). The tract at residues 257-282 (KERKEDSHTTLHETTNRQSYARNHEP) is disordered. Polar residues predominate over residues 272-282 (NRQSYARNHEP).

This sequence belongs to the PA-phosphatase related phosphoesterase family. In terms of assembly, forms functional homodimers and homooligomers that are not required for substrate recognition and catalytic activity. Can also form heterooligomers with PLPP2 and PLPP3. Post-translationally, N-glycosylated. N-linked sugars are of the complex type. N-glycosylation is not required for the phosphatase activity.

Its subcellular location is the cell membrane. It is found in the apical cell membrane. The protein resides in the membrane raft. The protein localises to the membrane. It localises to the caveola. The enzyme catalyses a 1,2-diacyl-sn-glycero-3-phosphate + H2O = a 1,2-diacyl-sn-glycerol + phosphate. It carries out the reaction 1,2-dihexadecanoyl-sn-glycero-3-phosphate + H2O = 1,2-dihexadecanoyl-sn-glycerol + phosphate. It catalyses the reaction 1,2-di-(9Z-octadecenoyl)-sn-glycero-3-phosphate + H2O = 1,2-di-(9Z-octadecenoyl)-sn-glycerol + phosphate. The catalysed reaction is a monoacyl-sn-glycero-3-phosphate + H2O = a monoacylglycerol + phosphate. The enzyme catalyses (9Z)-octadecenoyl-sn-glycero-3-phosphate + H2O = (9Z-octadecenoyl)-glycerol + phosphate. It carries out the reaction a 1-acyl-sn-glycero-3-phosphate + H2O = a 1-acyl-sn-glycerol + phosphate. It catalyses the reaction 1-(9Z-octadecenoyl)-sn-glycero-3-phosphate + H2O = 1-(9Z-octadecenoyl)-sn-glycerol + phosphate. The catalysed reaction is a 1,2-diacyl-sn-glycerol 3-diphosphate + H2O = a 1,2-diacyl-sn-glycero-3-phosphate + phosphate + H(+). The enzyme catalyses sphing-4-enine 1-phosphate + H2O = sphing-4-enine + phosphate. It carries out the reaction an N-acylsphing-4-enine 1-phosphate + H2O = an N-acylsphing-4-enine + phosphate. It catalyses the reaction N-(octanoyl)-sphing-4-enine-1-phosphate + H2O = N-octanoylsphing-4-enine + phosphate. The catalysed reaction is N-(9Z-octadecenoyl)-ethanolamine phosphate + H2O = N-(9Z-octadecenoyl) ethanolamine + phosphate. The enzyme catalyses 1-hexadecanoyl-2-(9Z-octadecenoyl)-sn-glycero-3-phosphate + H2O = 1-hexadecanoyl-2-(9Z-octadecenoyl)-sn-glycerol + phosphate. It functions in the pathway lipid metabolism; phospholipid metabolism. With respect to regulation, magnesium-independent phospholipid phosphatase. Insensitive to N-ethylmaleimide. Its function is as follows. Magnesium-independent phospholipid phosphatase of the plasma membrane that catalyzes the dephosphorylation of a variety of glycerolipid and sphingolipid phosphate esters including phosphatidate/PA, lysophosphatidate/LPA, diacylglycerol pyrophosphate/DGPP, sphingosine 1-phosphate/S1P and ceramide 1-phosphate/C1P. Also acts on N-oleoyl ethanolamine phosphate/N-(9Z-octadecenoyl)-ethanolamine phosphate, a potential physiological compound. Through its extracellular phosphatase activity allows both the hydrolysis and the cellular uptake of these bioactive lipid mediators from the milieu, regulating signal transduction in different cellular processes. It is for instance essential for the extracellular hydrolysis of S1P and subsequent conversion into intracellular S1P. Involved in the regulation of inflammation, platelets activation, cell proliferation and migration among other processes. May also have an intracellular activity to regulate phospholipid-mediated signaling pathways. The polypeptide is Phospholipid phosphatase 1 (Rattus norvegicus (Rat)).